The chain runs to 128 residues: KRAB domain-containing protein 1 (128 aa).

A KRAB domain is found at 15 to 86 (VAFEDVAVYF…QPQGVLSRND (72 aa)).

This is KRAB domain-containing protein 1 (KRBOX1) from Homo sapiens (Human).